A 183-amino-acid polypeptide reads, in one-letter code: Dual-action ribosomal maturation protein DarP (183 aa).

Belongs to the DarP family.

The protein localises to the cytoplasm. Functionally, member of a network of 50S ribosomal subunit biogenesis factors which assembles along the 30S-50S interface, preventing incorrect 23S rRNA structures from forming. Promotes peptidyl transferase center (PTC) maturation. The polypeptide is Dual-action ribosomal maturation protein DarP (Salmonella paratyphi A (strain ATCC 9150 / SARB42)).